We begin with the raw amino-acid sequence, 327 residues long: Eukaryotic translation initiation factor 3 subunit I (327 aa).

WD repeat units follow at residues 8-49 (GHER…GSYD), 51-89 (HNGA…CIYT), 188-227 (VHRY…KLKQ), 229-268 (KSER…GHFE), and 285-324 (GHFG…LGFT).

Belongs to the eIF-3 subunit I family. In terms of assembly, component of the eukaryotic translation initiation factor 3 (eIF-3) complex.

It is found in the cytoplasm. Functionally, component of the eukaryotic translation initiation factor 3 (eIF-3) complex, which is involved in protein synthesis of a specialized repertoire of mRNAs and, together with other initiation factors, stimulates binding of mRNA and methionyl-tRNAi to the 40S ribosome. The eIF-3 complex specifically targets and initiates translation of a subset of mRNAs involved in cell proliferation. The polypeptide is Eukaryotic translation initiation factor 3 subunit I (Caenorhabditis briggsae).